The chain runs to 300 residues: 4-hydroxy-tetrahydrodipicolinate synthase (300 aa).

Residue threonine 55 coordinates pyruvate. The Proton donor/acceptor role is filled by tyrosine 143. Lysine 171 acts as the Schiff-base intermediate with substrate in catalysis. Isoleucine 211 serves as a coordination point for pyruvate.

It belongs to the DapA family. As to quaternary structure, homotetramer; dimer of dimers.

It localises to the cytoplasm. It carries out the reaction L-aspartate 4-semialdehyde + pyruvate = (2S,4S)-4-hydroxy-2,3,4,5-tetrahydrodipicolinate + H2O + H(+). It functions in the pathway amino-acid biosynthesis; L-lysine biosynthesis via DAP pathway; (S)-tetrahydrodipicolinate from L-aspartate: step 3/4. Functionally, catalyzes the condensation of (S)-aspartate-beta-semialdehyde [(S)-ASA] and pyruvate to 4-hydroxy-tetrahydrodipicolinate (HTPA). In Mycobacterium bovis (strain ATCC BAA-935 / AF2122/97), this protein is 4-hydroxy-tetrahydrodipicolinate synthase.